The primary structure comprises 298 residues: Max-like protein X (298 aa).

The interval 1-63 is disordered; the sequence is MTEPGASPED…ARGCREDSSH (63 aa). The residue at position 7 (Ser-7) is a Phosphoserine. The span at 28–37 shows a compositional bias: basic residues; it reads GRARARRGSG. A phosphoserine mark is found at Ser-45, Ser-48, Ser-74, Ser-77, and Ser-98. The span at 98–109 shows a compositional bias: polar residues; sequence SIGSTSASSVPN. Positions 98-119 are disordered; it reads SIGSTSASSVPNTDDEDSDYQQ. Residues 129 to 187 enclose the bHLH domain; the sequence is RRRRAHTQAEQKRRDAIKRGYDDLQTIVPTCQQQDFSIGSQKLSKAIVLQKTIDYIQFL. The tract at residues 194–214 is leucine-zipper; it reads QEEEVSTLRKDVTALKIMKVN.

In terms of assembly, efficient DNA binding requires dimerization with another bHLH protein. Binds DNA as a heterodimer with MAD1, MAD4, MNT, WBSCR14 and MLXIP. Can also bind DNA as a homodimer. As to expression, expressed in all tissues examined: stomach, duodenum, jejunum, ileum, colon, liver, pancreas, salivary gland, kidney, spleen, lung, heart, skeletal muscle, brain, ovary and testis.

It localises to the cytoplasm. The protein resides in the nucleus. Its function is as follows. Transcription regulator. Forms a sequence-specific DNA-binding protein complex with MAD1, MAD4, MNT, WBSCR14 and MLXIP which recognizes the core sequence 5'-CACGTG-3'. The TCFL4-MAD1, TCFL4-MAD4, TCFL4-WBSCR14 complexes are transcriptional repressors. Plays a role in transcriptional activation of glycolytic target genes. Involved in glucose-responsive gene regulation. The polypeptide is Max-like protein X (Mlx) (Mus musculus (Mouse)).